Reading from the N-terminus, the 264-residue chain is Dehydrodolichyl diphosphate synthase complex subunit SPAC4D7.04c (264 aa).

The protein belongs to the UPP synthase family. In terms of assembly, forms an active dehydrodolichyl diphosphate synthase complex with nus1. The cofactor is Mg(2+).

It localises to the endoplasmic reticulum membrane. It carries out the reaction n isopentenyl diphosphate + (2E,6E)-farnesyl diphosphate = a di-trans,poly-cis-polyprenyl diphosphate + n diphosphate. It functions in the pathway protein modification; protein glycosylation. With nus1, forms the dehydrodolichyl diphosphate synthase (DDS) complex, an essential component of the dolichol monophosphate (Dol-P) biosynthetic machinery. Adds multiple copies of isopentenyl pyrophosphate (IPP) to farnesyl pyrophosphate (FPP) to produce dehydrodolichyl diphosphate (Dedol-PP), a precursor of dolichol which is utilized as a sugar carrier in protein glycosylation in the endoplasmic reticulum (ER). The protein is Dehydrodolichyl diphosphate synthase complex subunit SPAC4D7.04c of Schizosaccharomyces pombe (strain 972 / ATCC 24843) (Fission yeast).